The primary structure comprises 1369 residues: Phosphoribosylformylglycinamidine synthase (1369 aa).

2 disordered regions span residues H321–K352 and E373–R400. G330 to D341 serves as a coordination point for ATP. A721 is a binding site for ATP. Residues D722, E761, N765, and D934 each coordinate Mg(2+). S936 is an ATP binding site. A Glutamine amidotransferase type-1 domain is found at M1116–G1369. C1209 acts as the Nucleophile in catalysis. Residues H1330 and E1332 contribute to the active site.

This sequence in the N-terminal section; belongs to the FGAMS family. As to quaternary structure, monomer.

It localises to the cytoplasm. It catalyses the reaction N(2)-formyl-N(1)-(5-phospho-beta-D-ribosyl)glycinamide + L-glutamine + ATP + H2O = 2-formamido-N(1)-(5-O-phospho-beta-D-ribosyl)acetamidine + L-glutamate + ADP + phosphate + H(+). Its pathway is purine metabolism; IMP biosynthesis via de novo pathway; 5-amino-1-(5-phospho-D-ribosyl)imidazole from N(2)-formyl-N(1)-(5-phospho-D-ribosyl)glycinamide: step 1/2. Its function is as follows. Phosphoribosylformylglycinamidine synthase involved in the purines biosynthetic pathway. Catalyzes the ATP-dependent conversion of formylglycinamide ribonucleotide (FGAR) and glutamine to yield formylglycinamidine ribonucleotide (FGAM) and glutamate. This chain is Phosphoribosylformylglycinamidine synthase, found in Ralstonia nicotianae (strain ATCC BAA-1114 / GMI1000) (Ralstonia solanacearum).